The sequence spans 393 residues: ATP phosphoribosyltransferase regulatory subunit (393 aa).

Belongs to the class-II aminoacyl-tRNA synthetase family. HisZ subfamily. Heteromultimer composed of HisG and HisZ subunits.

It localises to the cytoplasm. It participates in amino-acid biosynthesis; L-histidine biosynthesis; L-histidine from 5-phospho-alpha-D-ribose 1-diphosphate: step 1/9. Functionally, required for the first step of histidine biosynthesis. May allow the feedback regulation of ATP phosphoribosyltransferase activity by histidine. In Chromohalobacter salexigens (strain ATCC BAA-138 / DSM 3043 / CIP 106854 / NCIMB 13768 / 1H11), this protein is ATP phosphoribosyltransferase regulatory subunit.